Reading from the N-terminus, the 89-residue chain is Small ribosomal subunit protein bS20 (89 aa).

The protein belongs to the bacterial ribosomal protein bS20 family.

Its function is as follows. Binds directly to 16S ribosomal RNA. This chain is Small ribosomal subunit protein bS20, found in Wolbachia pipientis subsp. Culex pipiens (strain wPip).